The sequence spans 346 residues: Probable electron transfer flavoprotein subunit alpha, mitochondrial (346 aa).

Residue 285-313 (LYVAVGISGAIQHLAGMKESKMIVAINKD) coordinates FAD.

This sequence belongs to the ETF alpha-subunit/FixB family. Heterodimer of an alpha and a beta subunit. FAD serves as cofactor.

It localises to the mitochondrion matrix. Its function is as follows. The electron transfer flavoprotein serves as a specific electron acceptor for several dehydrogenases, including five acyl-CoA dehydrogenases, glutaryl-CoA and sarcosine dehydrogenase. It transfers the electrons to the main mitochondrial respiratory chain via ETF-ubiquinone oxidoreductase (ETF dehydrogenase). The polypeptide is Probable electron transfer flavoprotein subunit alpha, mitochondrial (ETF1) (Cryptococcus neoformans var. grubii (Filobasidiella neoformans var. grubii)).